Here is a 543-residue protein sequence, read N- to C-terminus: ABC transport system permease protein p69 (543 aa).

The next 12 helical transmembrane spans lie at 18–38, 78–98, 115–135, 141–161, 211–231, 237–257, 288–308, 354–374, 379–399, 413–433, 482–502, and 510–530; these read IWYW…YSWI, AFFV…FSYW, ITIV…SNLF, ATLT…TTFF, TLLS…PLSI, LVLI…VVVF, IIFI…LVTI, ISLI…SCNL, FSIS…ILLF, IILV…SINF, LILF…NFFE, and GSVT…FLSV. In terms of domain architecture, ABC transmembrane type-1 spans 74-256; it reads LAQTAFFVTG…TFLIFIEVVV (183 aa).

The protein belongs to the binding-protein-dependent transport system permease family.

It localises to the cell membrane. Functionally, probably part of a high-affinity transport system. This chain is ABC transport system permease protein p69 (p69), found in Mycoplasma genitalium (strain ATCC 33530 / DSM 19775 / NCTC 10195 / G37) (Mycoplasmoides genitalium).